A 159-amino-acid polypeptide reads, in one-letter code: Cytochrome b6-f complex subunit 4 (159 aa).

3 consecutive transmembrane segments (helical) span residues 35-55 (ILIFGVVILGTIFGVIALAVL), 93-113 (LLGVVLMAAIPIGLALVPFIE), and 127-147 (ATAVFLIGTVVTMYLGIGAMI).

Belongs to the cytochrome b family. PetD subfamily. As to quaternary structure, the 4 large subunits of the cytochrome b6-f complex are cytochrome b6, subunit IV (17 kDa polypeptide, PetD), cytochrome f and the Rieske protein, while the 4 small subunits are PetG, PetL, PetM and PetN. The complex functions as a dimer.

The protein localises to the cell inner membrane. In terms of biological role, component of the cytochrome b6-f complex, which mediates electron transfer between photosystem II (PSII) and photosystem I (PSI), cyclic electron flow around PSI, and state transitions. The sequence is that of Cytochrome b6-f complex subunit 4 from Gloeobacter violaceus (strain ATCC 29082 / PCC 7421).